We begin with the raw amino-acid sequence, 112 residues long: Large ribosomal subunit protein uL18 (112 aa).

The protein belongs to the universal ribosomal protein uL18 family. Part of the 50S ribosomal subunit; part of the 5S rRNA/L5/L18/L25 subcomplex. Contacts the 5S and 23S rRNAs.

This is one of the proteins that bind and probably mediate the attachment of the 5S RNA into the large ribosomal subunit, where it forms part of the central protuberance. This Deinococcus deserti (strain DSM 17065 / CIP 109153 / LMG 22923 / VCD115) protein is Large ribosomal subunit protein uL18.